The chain runs to 391 residues: Cytochrome P450 165A3 (391 aa).

The segment at 1 to 22 (MFEEKNALRGTEIHRRERFDPG) is disordered. Heme is bound at residue C342.

The protein belongs to the cytochrome P450 family. Heme is required as a cofactor.

It participates in antibiotic biosynthesis; vancomycin biosynthesis. Functionally, involved in the coupling of aromatic side chains of the heptapeptide of vancomycin. In Amycolatopsis orientalis (Nocardia orientalis), this protein is Cytochrome P450 165A3 (cyp165A3).